A 364-amino-acid chain; its full sequence is Cobalt-precorrin-5B C(1)-methyltransferase (364 aa).

This sequence belongs to the CbiD family.

The enzyme catalyses Co-precorrin-5B + S-adenosyl-L-methionine = Co-precorrin-6A + S-adenosyl-L-homocysteine. It functions in the pathway cofactor biosynthesis; adenosylcobalamin biosynthesis; cob(II)yrinate a,c-diamide from sirohydrochlorin (anaerobic route): step 6/10. In terms of biological role, catalyzes the methylation of C-1 in cobalt-precorrin-5B to form cobalt-precorrin-6A. In Pseudomonas putida (strain ATCC 700007 / DSM 6899 / JCM 31910 / BCRC 17059 / LMG 24140 / F1), this protein is Cobalt-precorrin-5B C(1)-methyltransferase.